A 362-amino-acid polypeptide reads, in one-letter code: Phosphoserine aminotransferase (362 aa).

An L-glutamate-binding site is contributed by arginine 43. Residues alanine 77–arginine 78, tryptophan 103, threonine 153, aspartate 173, and glutamine 196 contribute to the pyridoxal 5'-phosphate site. Position 197 is an N6-(pyridoxal phosphate)lysine (lysine 197).

It belongs to the class-V pyridoxal-phosphate-dependent aminotransferase family. SerC subfamily. As to quaternary structure, homodimer. It depends on pyridoxal 5'-phosphate as a cofactor.

It is found in the cytoplasm. The enzyme catalyses O-phospho-L-serine + 2-oxoglutarate = 3-phosphooxypyruvate + L-glutamate. The catalysed reaction is 4-(phosphooxy)-L-threonine + 2-oxoglutarate = (R)-3-hydroxy-2-oxo-4-phosphooxybutanoate + L-glutamate. It functions in the pathway amino-acid biosynthesis; L-serine biosynthesis; L-serine from 3-phospho-D-glycerate: step 2/3. Its pathway is cofactor biosynthesis; pyridoxine 5'-phosphate biosynthesis; pyridoxine 5'-phosphate from D-erythrose 4-phosphate: step 3/5. Catalyzes the reversible conversion of 3-phosphohydroxypyruvate to phosphoserine and of 3-hydroxy-2-oxo-4-phosphonooxybutanoate to phosphohydroxythreonine. The chain is Phosphoserine aminotransferase from Legionella pneumophila (strain Lens).